We begin with the raw amino-acid sequence, 434 residues long: Histidine--tRNA ligase (434 aa).

Belongs to the class-II aminoacyl-tRNA synthetase family. As to quaternary structure, homodimer.

Its subcellular location is the cytoplasm. The catalysed reaction is tRNA(His) + L-histidine + ATP = L-histidyl-tRNA(His) + AMP + diphosphate + H(+). The polypeptide is Histidine--tRNA ligase (Chlorobium phaeobacteroides (strain BS1)).